The sequence spans 2623 residues: Immunoglobulin superfamily member 10 (2623 aa).

The signal sequence occupies residues 1-28 (MKVKGRGITCLLVSFAVICLVATPGGKA). In terms of domain architecture, LRRNT spans 29–56 (CPRRCACYMPTEVHCTFRYLTSIPDSIP). 6 LRR repeats span residues 58–79 (NVERINLGYNSLVRLMETDFSG), 82–103 (KLELLMLHSNGIHTIPDKTFSD), 106–127 (ALQVLKMSYNKVRKLQKDTFYG), 130–151 (SLTRLHMDHNNIEFINPEVFYG), 154–175 (FLRLVHLEGNQLTKLHPDTFVS), and 186–207 (FIKFLYLSDNFLTSLPQEMVSY). In terms of domain architecture, LRRCT spans 219 to 281 (NPWTCDCHLK…VSAAAFQCAK (63 aa)). Residues N319 and N439 are each glycosylated (N-linked (GlcNAc...) asparagine). Ig-like C2-type domains follow at residues 461 to 567 (PRAE…YRIT) and 571 to 661 (PLVE…FQVS). Cystine bridges form between C497–C551 and C595–C645. The N-linked (GlcNAc...) asparagine glycan is linked to N627. Disordered regions lie at residues 668 to 692 (RPLEHDGETEGSGLDESNPIAHLKE) and 767 to 788 (AMPDKRENTTVSPPPVVTQLPN). Residues N774 and N999 are each glycosylated (N-linked (GlcNAc...) asparagine). Disordered regions lie at residues 1334–1376 (TQTE…AMTP) and 1434–1453 (STIASETTLSSKSHQSTTTR). Basic and acidic residues predominate over residues 1335 to 1356 (QTERSRAQTIQREQEPQKKNRT). Residues 1357 to 1373 (DPNISPDQSSGFTTPTA) show a composition bias toward polar residues. 10 consecutive Ig-like C2-type domains span residues 1648–1739 (PRIV…VTLS), 1745–1836 (PRIL…VKIQ), 1841–1933 (PPVI…VMLT), 1941–2034 (PRIE…VSLR), 2037–2135 (PAKI…VHLT), 2141–2229 (PRIR…YKLD), 2234–2331 (PPLI…LEVL), 2337–2427 (PTFR…VILE), 2432–2518 (PVIL…TLIT), and 2528–2623 (PRIT…IQVI). Disulfide bonds link C1670/C1723, C1767/C1820, and C1864/C1917. Residues N1899 and N1962 are each glycosylated (N-linked (GlcNAc...) asparagine). Cystine bridges form between C1963-C2016, C2060-C2119, C2163-C2213, C2261-C2313, C2359-C2411, C2454-C2506, and C2550-C2605. N-linked (GlcNAc...) asparagine glycosylation occurs at N2101. Residue Y2603 is modified to Phosphotyrosine.

It localises to the secreted. Involved in the control of early migration of neurons expressing gonadotropin-releasing hormone (GNRH neurons). May be involved in the maintenance of osteochondroprogenitor cells pool. In Homo sapiens (Human), this protein is Immunoglobulin superfamily member 10 (IGSF10).